The chain runs to 117 residues: UPF0342 protein GWCH70_0629 (117 aa).

It belongs to the UPF0342 family.

The sequence is that of UPF0342 protein GWCH70_0629 from Geobacillus sp. (strain WCH70).